The chain runs to 296 residues: Giardin subunit alpha-3 (296 aa).

4 Annexin repeats span residues 3–72 (DTVT…SNCW), 74–146 (ELPV…TWIK), 153–222 (NNIN…TAHY), and 226–295 (GMNN…VLWR).

Belongs to the annexin family. Giardin subunit alpha subfamily.

It localises to the cytoplasm. The protein localises to the cytoskeleton. Its function is as follows. Giardins are involved in parasite attachment to the intestinal mucosa and in the cytoskeletal disassembly and reassembly that marks the transition from infectious trophozoite to transmissible cyst. They may interact with other cytoskeletal proteins such as microtubules in the microribbons or crossbridges, to maintain the integrity of the ventral disk. The sequence is that of Giardin subunit alpha-3 from Giardia intestinalis (Giardia lamblia).